A 537-amino-acid chain; its full sequence is Proline--tRNA ligase (537 aa).

The protein belongs to the class-II aminoacyl-tRNA synthetase family. ProS type 3 subfamily. As to quaternary structure, homodimer.

It localises to the cytoplasm. It carries out the reaction tRNA(Pro) + L-proline + ATP = L-prolyl-tRNA(Pro) + AMP + diphosphate. Its function is as follows. Catalyzes the attachment of proline to tRNA(Pro) in a two-step reaction: proline is first activated by ATP to form Pro-AMP and then transferred to the acceptor end of tRNA(Pro). The sequence is that of Proline--tRNA ligase from Nanoarchaeum equitans (strain Kin4-M).